The following is a 241-amino-acid chain: Large ribosomal subunit protein uL3 (241 aa).

Disordered regions lie at residues 139–164 (VSHR…KMPG) and 215–241 (DAPK…QEGA). The residue at position 151 (Gln-151) is an N5-methylglutamine.

This sequence belongs to the universal ribosomal protein uL3 family. In terms of assembly, part of the 50S ribosomal subunit. Forms a cluster with proteins L14 and L19. In terms of processing, methylated by PrmB.

One of the primary rRNA binding proteins, it binds directly near the 3'-end of the 23S rRNA, where it nucleates assembly of the 50S subunit. This Rhodopseudomonas palustris (strain BisB5) protein is Large ribosomal subunit protein uL3.